The primary structure comprises 101 residues: Small ribosomal subunit protein uS14 (101 aa).

This sequence belongs to the universal ribosomal protein uS14 family. Part of the 30S ribosomal subunit. Contacts proteins S3 and S10.

Functionally, binds 16S rRNA, required for the assembly of 30S particles and may also be responsible for determining the conformation of the 16S rRNA at the A site. The protein is Small ribosomal subunit protein uS14 of Gluconobacter oxydans (strain 621H) (Gluconobacter suboxydans).